The chain runs to 498 residues: ADP,ATP carrier protein 1 (498 aa).

The Cytoplasmic segment spans residues 1-33 (MSTTKSDNYISELRKVIWPIERYENKKFLPMAF). A helical transmembrane segment spans residues 34–54 (MMFCILLNYSTLRSIKDGFVV). A disulfide bridge links Cys37 with Cys85. Topologically, residues 55–67 (TDIGAEAISFLKT) are extracellular. A helical transmembrane segment spans residues 68–88 (YIVLPSAVIAMIVYVKLCDIL). Residues 89 to 92 (KQEN) are Cytoplasmic-facing. The chain crosses the membrane as a helical span at residues 93–113 (VFYVITSFFLAYFALFAFVLY). The Extracellular portion of the chain corresponds to 114-147 (PNPDLVHPNPEAIESLSLAYPNFKWFIRIVGKWS). A helical transmembrane segment spans residues 148 to 168 (FASFYTMAELWGTLMLSLLFW). The Cytoplasmic portion of the chain corresponds to 169 to 184 (QFANQITKTDEAKRFY). Residues 185-205 (SMFGLLANLALPVTSLIIGYF) traverse the membrane as a helical segment. The Extracellular segment spans residues 206–218 (LHEKTQIVAEHLK). Residues 219 to 239 (FTPLFVIMIISSLAVILTYRW) form a helical membrane-spanning segment. The Cytoplasmic portion of the chain corresponds to 240–279 (MNKNVLTDPKLYDPALVKGKKAKAKMSLIESFKMIFTSKY). A helical membrane pass occupies residues 280 to 300 (VGYIALLLIAYGISVNLVEGV). Residues 301–320 (WKSKLKELHPTKEAYTMYMG) are Extracellular-facing. The chain crosses the membrane as a helical span at residues 321 to 341 (QFQAYQGWVAIAFMIIGSNIL). Residues 342–348 (RKVSWLT) lie on the Cytoplasmic side of the membrane. The chain crosses the membrane as a helical span at residues 349 to 369 (AAMITPLMMLITGIAFFAFIF). At 370–379 (FDSVIAMYLT) the chain is on the extracellular side. The helical transmembrane segment at 380–400 (GILASGPLALAVMIGTIQNVL) threads the bilayer. The Cytoplasmic portion of the chain corresponds to 401-438 (SKGVKYSLFDATKNMAYIPLDKDLRVKGQAAVEVIGGR). 436 to 442 (GGRFGKS) provides a ligand contact to ATP. Residues 439-459 (FGKSGGAIIQSTFFIIFPALG) form a helical membrane-spanning segment. Topologically, residues 460–465 (FVEATP) are extracellular. The helical transmembrane segment at 466 to 486 (YFASIFFVIVILWIYAVKGLN) threads the bilayer. At 487-498 (KEYQVLVNNTEK) the chain is on the cytoplasmic side.

It belongs to the ADP/ATP translocase tlc family.

The protein resides in the cell membrane. Functionally, provides the rickettsial cell with host ATP in exchange for rickettsial ADP. This is an obligate exchange system. This energy acquiring activity is an important component of rickettsial parasitism. The chain is ADP,ATP carrier protein 1 (tlcA) from Rickettsia bellii (strain RML369-C).